The following is a 561-amino-acid chain: Corneodesmosin (561 aa).

Positions Met-1–Ala-32 are cleaved as a signal peptide. Disordered regions lie at residues Pro-41 to Ser-275, Gly-415 to Leu-466, and Pro-536 to Ser-561. Positions Gly-61–Ser-99 are enriched in low complexity. Gly residues predominate over residues Gly-116–Ser-127. Low complexity-rich tracts occupy residues Gln-128 to Ser-207 and Thr-224 to Ser-248. Positions Gly-415–Ile-430 are enriched in polar residues. The span at Thr-431 to Leu-466 shows a compositional bias: low complexity.

Its subcellular location is the secreted. Important for the epidermal barrier integrity. The protein is Corneodesmosin (Cdsn) of Mus musculus (Mouse).